The following is a 464-amino-acid chain: MNTSELETLIRTILSEQLTTPAQTPVQPQGKGIFQSVSEAIDAAHQAFLRYQQCPLKTRSAIISAMRQELTPLLAPLAEESANETGMGNKEDKFLKNKAALDNTPGVEDLTTTALTGDGGMVLFEYSPFGVIGSVAPSTNPTETIINNSISMLAAGNSIYFSPHPGAKKVSLKLISLIEEIAFRCCGIRNLVVTVAEPTFEATQQMMAHPRIAVLAITGGPGIVAMGMKSGKKVIGAGAGNPPCIVDETADLVKAAEDIINGASFDYNLPCIAEKSLIVVESVAERLVQQMQTFGALLLSPADTDKLRAVCLPEGQANKKLVGKSPSAMLEAAGIAVPAKAPRLLIALVNADDPWVTSEQLMPMLPVVKVSDFDSALALALKVEEGLHHTAIMHSQNVSRLNLAARTLQTSIFVKNGPSYAGIGVGGEGFTTFTIATPTGEGTTSARTFARSRRCVLTNGFSIR.

Residues 1 to 18 (MNTSELETLIRTILSEQL) form a targets protein to the BMC region.

It belongs to the EutE/PduP family. Interacts with BMC shell proteins PduA and PduJ, which target this protein to BMC. Interacts with PduQ, probably via the N-terminus of PduQ. Interacts with PduK, probably with its BMC-containing N-terminus.

The protein resides in the bacterial microcompartment. It carries out the reaction propanal + NAD(+) + CoA = propanoyl-CoA + NADH + H(+). It functions in the pathway polyol metabolism; 1,2-propanediol degradation. In terms of biological role, a CoA-acylating aldehyde dehydrogenase required for optimal 1,2-propanediol (1,2-PD) degradation. Optimizes growth in the bacterial microcompartment (BMC) dedicated to 1,2-PD degradation by minimizing propionaldehyde toxicity. Directly targeted to the BMC. NAD(+) and NADH are regenerated internally within the Pdu BMC by the PduP and PduQ enzymes, which reduce NAD(+) and oxidize NADH respectively, although there must also be cofactor transport across the BMC. Its function is as follows. The 1,2-PD-specific bacterial microcompartment (BMC) concentrates low levels of 1,2-PD catabolic enzymes, concentrates volatile reaction intermediates thus enhancing pathway flux and keeps the level of toxic, mutagenic propionaldehyde low. This Salmonella typhimurium (strain LT2 / SGSC1412 / ATCC 700720) protein is Propanal dehydrogenase (CoA-propanoylating).